Reading from the N-terminus, the 102-residue chain is Biotrophy-associated secreted protein 4 (102 aa).

The N-terminal stretch at 1-21 (MQLSFSAIAILLAFAVNHATA) is a signal peptide. N-linked (GlcNAc...) asparagine glycosylation occurs at N36.

Its subcellular location is the secreted. Secreted effector involved in biotrophic colonization of plant cells. Participates in transition from the biotrophic to the necrotrophic phase of Magnaporthe oryzae. Elicits rice basic defense responses during the early stage of interaction and promotes cell death in the late stage of compatible interaction. The protein is Biotrophy-associated secreted protein 4 of Pyricularia oryzae (strain 70-15 / ATCC MYA-4617 / FGSC 8958) (Rice blast fungus).